The sequence spans 377 residues: Succinyl-diaminopimelate desuccinylase (377 aa).

Residue histidine 68 participates in Zn(2+) binding. The active site involves aspartate 70. Aspartate 101 serves as a coordination point for Zn(2+). The active-site Proton acceptor is glutamate 135. Residues glutamate 136, glutamate 164, and histidine 350 each coordinate Zn(2+).

This sequence belongs to the peptidase M20A family. DapE subfamily. Homodimer. Zn(2+) serves as cofactor. Co(2+) is required as a cofactor.

The enzyme catalyses N-succinyl-(2S,6S)-2,6-diaminopimelate + H2O = (2S,6S)-2,6-diaminopimelate + succinate. Its pathway is amino-acid biosynthesis; L-lysine biosynthesis via DAP pathway; LL-2,6-diaminopimelate from (S)-tetrahydrodipicolinate (succinylase route): step 3/3. Its function is as follows. Catalyzes the hydrolysis of N-succinyl-L,L-diaminopimelic acid (SDAP), forming succinate and LL-2,6-diaminopimelate (DAP), an intermediate involved in the bacterial biosynthesis of lysine and meso-diaminopimelic acid, an essential component of bacterial cell walls. In Aliivibrio fischeri (strain MJ11) (Vibrio fischeri), this protein is Succinyl-diaminopimelate desuccinylase.